The chain runs to 215 residues: Cytochrome b6 (215 aa).

The chain crosses the membrane as a helical span at residues 32–52 (IFYCLGGITLTCFLVQVATGF). Cysteine 35 contributes to the heme c binding site. Histidine 86 and histidine 100 together coordinate heme b. The next 3 membrane-spanning stretches (helical) occupy residues 90 to 110 (ASMMVLMMILHVFRVYLTGGF), 116 to 136 (LTWVTGVVLGVLTASFGVTGY), and 186 to 206 (LHTFVLPLLTAVFMLMHFSMI). Heme b-binding residues include histidine 187 and histidine 202.

Belongs to the cytochrome b family. PetB subfamily. As to quaternary structure, the 4 large subunits of the cytochrome b6-f complex are cytochrome b6, subunit IV (17 kDa polypeptide, PetD), cytochrome f and the Rieske protein, while the 4 small subunits are PetG, PetL, PetM and PetN. The complex functions as a dimer. Heme b serves as cofactor. It depends on heme c as a cofactor.

It localises to the plastid. The protein localises to the chloroplast thylakoid membrane. Component of the cytochrome b6-f complex, which mediates electron transfer between photosystem II (PSII) and photosystem I (PSI), cyclic electron flow around PSI, and state transitions. This chain is Cytochrome b6, found in Lotus japonicus (Lotus corniculatus var. japonicus).